The following is a 63-amino-acid chain: Large ribosomal subunit protein uL29 (63 aa).

Belongs to the universal ribosomal protein uL29 family.

This chain is Large ribosomal subunit protein uL29, found in Bordetella petrii (strain ATCC BAA-461 / DSM 12804 / CCUG 43448).